The following is a 301-amino-acid chain: Phosducin-like protein (301 aa).

At Thr2 the chain carries N-acetylthreonine. Residues 18 to 57 (SSSEDEDSDHEDKDRGRCAPASSSVPAEAELAGEGISVNT) form a disordered region. 2 positions are modified to phosphoserine: Ser20 and Ser25. Low complexity predominate over residues 36-49 (APASSSVPAEAELA). In terms of domain architecture, Phosducin spans 36 to 299 (APASSSVPAE…TCHSEDSDLE (264 aa)). 3 positions are modified to phosphoserine: Ser226, Ser293, and Ser296.

It belongs to the phosducin family. As to quaternary structure, forms a complex with the beta and gamma subunits of the GTP-binding protein, transducin. Interacts with the CCT chaperonin complex.

The protein localises to the cell projection. It is found in the cilium. Its function is as follows. Acts as a positive regulator of hedgehog signaling and regulates ciliary function. Functionally, functions as a co-chaperone for CCT in the assembly of heterotrimeric G protein complexes, facilitates the assembly of both Gbeta-Ggamma and RGS-Gbeta5 heterodimers. Acts as a negative regulator of heterotrimeric G proteins assembly by trapping the preloaded G beta subunits inside the CCT chaperonin. The sequence is that of Phosducin-like protein (PDCL) from Homo sapiens (Human).